The sequence spans 457 residues: Aromatic amino acid transport protein AroP (457 aa).

At 1–19 the chain is on the cytoplasmic side; sequence MMEGQQHGEQLKRGLKNRH. A helical membrane pass occupies residues 20-40; that stretch reads IQLIALGGAIGTGLFLGSASV. Residues 41–42 are Periplasmic-facing; sequence IQ. A helical membrane pass occupies residues 43 to 63; the sequence is SAGPGIILGYAIAGFIAFLIM. The Cytoplasmic segment spans residues 64 to 86; sequence RQLGEMVVEEPVAGSFSHFAYKY. Residues 87–107 form a helical membrane-spanning segment; it reads WGSFAGFASGWNYWVLYVLVA. Over 108–117 the chain is Periplasmic; that stretch reads MAELTAVGKY. Residues 118 to 138 form a helical membrane-spanning segment; that stretch reads IQFWYPEIPTWVSAAVFFVVI. At 139 to 155 the chain is on the cytoplasmic side; that stretch reads NAINLTNVKVFGEMEFW. The chain crosses the membrane as a helical span at residues 156–176; the sequence is FAIIKVIAVVAMIIFGGWLLF. Topologically, residues 177 to 201 are periplasmic; it reads SGNGGPQASVSNLWDQGGFLPHGFT. A helical transmembrane segment spans residues 202 to 222; the sequence is GLVMMMAIIMFSFGGLELVGI. The Cytoplasmic segment spans residues 223-240; sequence TAAEADNPEQSIPKATNQ. A helical membrane pass occupies residues 241 to 261; sequence VIYRILIFYIGSLAVLLSLMP. At 262–271 the chain is on the periplasmic side; it reads WTRVTADTSP. Residues 272-292 form a helical membrane-spanning segment; the sequence is FVLIFHELGDTFVANALNIVV. Residues 293–333 are Cytoplasmic-facing; that stretch reads LTAALSVYNSCVYCNSRMLFGLAQQGNAPKALASVDKRGVP. Residues 334–354 traverse the membrane as a helical segment; the sequence is VNTILVSALVTALCVLINYLA. At 355-358 the chain is on the periplasmic side; it reads PESA. The chain crosses the membrane as a helical span at residues 359-379; sequence FGLLMALVVSALVINWAMISL. Residues 380-399 lie on the Cytoplasmic side of the membrane; it reads AHMKFRRAKQEQGVVTRFPA. Residues 400–420 traverse the membrane as a helical segment; sequence LLYPLGNWICLLFMAAVLVIM. Topologically, residues 421–425 are periplasmic; it reads LMTPG. Residues 426–446 traverse the membrane as a helical segment; sequence MAISVYLIPVWLIVLGIGYLF. Topologically, residues 447-457 are cytoplasmic; sequence KEKTAKAVKAH.

It belongs to the amino acid-polyamine-organocation (APC) superfamily. Amino acid transporter (AAT) (TC 2.A.3.1) family.

It is found in the cell inner membrane. It carries out the reaction L-phenylalanine(in) + H(+)(in) = L-phenylalanine(out) + H(+)(out). The catalysed reaction is L-tryptophan(in) + H(+)(in) = L-tryptophan(out) + H(+)(out). The enzyme catalyses L-tyrosine(in) + H(+)(in) = L-tyrosine(out) + H(+)(out). Functionally, permease that is involved in the active transport across the cytoplasmic membrane of all three aromatic amino acids, phenylalanine, tyrosine and tryptophan. This Shigella flexneri protein is Aromatic amino acid transport protein AroP (aroP).